Here is an 868-residue protein sequence, read N- to C-terminus: Probable inorganic carbon transporter subunit DabA (868 aa).

C392, D394, H574, and C589 together coordinate Zn(2+).

This sequence belongs to the inorganic carbon transporter (TC 9.A.2) DabA family. As to quaternary structure, forms a complex with DabB. Zn(2+) is required as a cofactor.

The protein resides in the cell membrane. In terms of biological role, part of an energy-coupled inorganic carbon pump. The polypeptide is Probable inorganic carbon transporter subunit DabA (Bacillus cereus (strain G9842)).